A 186-amino-acid polypeptide reads, in one-letter code: GTP-dependent dephospho-CoA kinase (186 aa).

D43, I44, V45, D62, E120, and D143 together coordinate GTP.

This sequence belongs to the GTP-dependent DPCK family.

It carries out the reaction 3'-dephospho-CoA + GTP = GDP + CoA + H(+). It participates in cofactor biosynthesis; coenzyme A biosynthesis. Catalyzes the GTP-dependent phosphorylation of the 3'-hydroxyl group of dephosphocoenzyme A to form coenzyme A (CoA). In Haloquadratum walsbyi (strain DSM 16790 / HBSQ001), this protein is GTP-dependent dephospho-CoA kinase.